Reading from the N-terminus, the 291-residue chain is Ribosomal RNA small subunit methyltransferase A (291 aa).

Residues H21, L23, G48, E70, D95, and N115 each coordinate S-adenosyl-L-methionine.

The protein belongs to the class I-like SAM-binding methyltransferase superfamily. rRNA adenine N(6)-methyltransferase family. RsmA subfamily.

It is found in the cytoplasm. It carries out the reaction adenosine(1518)/adenosine(1519) in 16S rRNA + 4 S-adenosyl-L-methionine = N(6)-dimethyladenosine(1518)/N(6)-dimethyladenosine(1519) in 16S rRNA + 4 S-adenosyl-L-homocysteine + 4 H(+). Functionally, specifically dimethylates two adjacent adenosines (A1518 and A1519) in the loop of a conserved hairpin near the 3'-end of 16S rRNA in the 30S particle. May play a critical role in biogenesis of 30S subunits. This Prochlorococcus marinus (strain NATL2A) protein is Ribosomal RNA small subunit methyltransferase A.